Here is a 236-residue protein sequence, read N- to C-terminus: MRMRITAILAAGLLAGCQNQAFNEIGRAPAMSPIGSGLQYTQTPQLAMYPKQPRHVTNGYSLWNDQQAALFKDARAINIGDILTVDIRIDDKASFENETDRSRKNSSGFNLGASGESQTSDFAWSGDLEYGSNTKTEGDGKTERSEKLRLLVAAVVTGVLENGNLLISGSQEVRVNHELRILNVAGIVRPRDVDADNVISYDRIAEARISYGGRGRLTEVQQPPWGQQLVDLVSPL.

The signal sequence occupies residues 1-16 (MRMRITAILAAGLLAG). The N-palmitoyl cysteine moiety is linked to residue C17. C17 is lipidated: S-diacylglycerol cysteine. The tract at residues 96-143 (ENETDRSRKNSSGFNLGASGESQTSDFAWSGDLEYGSNTKTEGDGKTE) is disordered. Over residues 105 to 122 (NSSGFNLGASGESQTSDF) the composition is skewed to polar residues.

Belongs to the FlgH family. As to quaternary structure, the basal body constitutes a major portion of the flagellar organelle and consists of four rings (L,P,S, and M) mounted on a central rod.

Its subcellular location is the cell outer membrane. It is found in the bacterial flagellum basal body. Functionally, assembles around the rod to form the L-ring and probably protects the motor/basal body from shearing forces during rotation. The chain is Flagellar L-ring protein from Sinorhizobium medicae (strain WSM419) (Ensifer medicae).